The sequence spans 200 residues: UPF0488 protein CG14286 (200 aa).

Disordered stretches follow at residues 1–28 (MHKRRTAKSINKPPPIQGAIKKPTPVAE) and 139–174 (KDFRFNFPSPAEDTSSKEPQPVQDFDPSSLQPAEAG).

Belongs to the UPF0488 family.

The polypeptide is UPF0488 protein CG14286 (Drosophila melanogaster (Fruit fly)).